Consider the following 173-residue polypeptide: Shikimate kinase (173 aa).

Gly-10 to Thr-15 serves as a coordination point for ATP. Thr-14 provides a ligand contact to Mg(2+). 3 residues coordinate substrate: Asp-32, Arg-56, and Gly-78. Arg-117 contributes to the ATP binding site. Arg-135 contributes to the substrate binding site.

It belongs to the shikimate kinase family. Monomer. Mg(2+) is required as a cofactor.

It is found in the cytoplasm. The enzyme catalyses shikimate + ATP = 3-phosphoshikimate + ADP + H(+). It functions in the pathway metabolic intermediate biosynthesis; chorismate biosynthesis; chorismate from D-erythrose 4-phosphate and phosphoenolpyruvate: step 5/7. In terms of biological role, catalyzes the specific phosphorylation of the 3-hydroxyl group of shikimic acid using ATP as a cosubstrate. This is Shikimate kinase from Limosilactobacillus fermentum (strain NBRC 3956 / LMG 18251) (Lactobacillus fermentum).